The primary structure comprises 462 residues: Probable acid phosphatase SPBC4.06 (462 aa).

His-35 serves as the catalytic Nucleophile. Catalysis depends on Asp-330, which acts as the Proton donor.

Belongs to the histidine acid phosphatase family.

The protein localises to the mitochondrion. It catalyses the reaction a phosphate monoester + H2O = an alcohol + phosphate. The sequence is that of Probable acid phosphatase SPBC4.06 from Schizosaccharomyces pombe (strain 972 / ATCC 24843) (Fission yeast).